The sequence spans 414 residues: GA-binding protein subunit beta-2 (414 aa).

ANK repeat units follow at residues aspartate 5–threonine 34, leucine 37–alanine 66, valine 70–alanine 99, leucine 103–alanine 132, and phenylalanine 136–threonine 166. The residue at position 218 (serine 218) is a Phosphoserine. Residues glutamate 310–asparagine 362 adopt a coiled-coil conformation.

In terms of assembly, heterotetramer of two alpha and two beta subunits. The C-terminal is necessary for the formation of a heterotetrameric GABP-alpha-2/beta-2 complex, and also facilitates homotypic dimerization. Interacts with ADGRB2. In terms of tissue distribution, high levels in thymus, spleen, kidney and intestine.

It is found in the nucleus. Transcription factor capable of interacting with purine rich repeats (GA repeats). Must associate with GABP-alpha to bind DNA. This is GA-binding protein subunit beta-2 (Gabpb2) from Mus musculus (Mouse).